Reading from the N-terminus, the 599-residue chain is MLTVIRRIFIIQTFIFITAEKIFHSRDHSDVLNNIHQAELITDTDTAQRFLSKYGFIKAAGSEESQLSESSGDLDFSLSLDLHEGGTTSGSSSSDLQFVSALRDFQRLSDLPVTGVFDDATKAAMNKPRCGVMDDDQELKDVTGSNSTRNHIRTSTNTSHNHEHQAPVRKKRHLSALLKNTSLQKRDVSKWTGHMAFSKSVLKWRLIGEGYSSQLSIQEQKYIFRLAFRMWSEISPLQFIEDLHSPLENIDIRLGFGTGRHLGCSQRFDGAGREFAHAWFLGDIHFDDDEHFTVPNTGSGISLLKVAVHEIGHVLGLPHIYRPGSIMQPSYLPQDAGFEIDWMDRKSIQRLYGVCTGRFSTVFDWIRKEQTPYGEVVVRFNTYFMRDGLYWLYENRNNRTRYGDPVAVQVGWHGLPSGGVDAYVHVWNRKTDAVYFFKGMQYWRYDSENDHVFSHAPDGRLYPRLISEDFPGVSGPLDTAYYDRRDAHIYFFKGSQVFRFDVRMRRLASSSPQEMTEVFPAIVSGDHPVRSLDAAYFSYTHNTVFLLKGSLFWRVLSGKERRRRAFLPMNGLLAHRRVHEQWFDICDVHSSSLRTTRRR.

Residues 1–20 (MLTVIRRIFIIQTFIFITAE) form the signal peptide. The propeptide occupies 21-170 (KIFHSRDHSD…NHEHQAPVRK (150 aa)). Cys130 serves as a coordination point for Zn(2+). A disordered region spans residues 141-170 (DVTGSNSTRNHIRTSTNTSHNHEHQAPVRK). Polar residues predominate over residues 143–159 (TGSNSTRNHIRTSTNTS). His309 lines the Zn(2+) pocket. Glu310 is an active-site residue. His313 and His319 together coordinate Zn(2+). A disulfide bridge connects residues Cys355 and Cys586. Hemopexin repeat units follow at residues 356-415 (TGRF…WHGL), 417-473 (SGGV…FPGV), 474-522 (SGPL…FPAI), and 529-585 (VRSL…WFDI). Asn398 carries N-linked (GlcNAc...) asparagine glycosylation.

Belongs to the peptidase M10A family. In terms of processing, the precursor is cleaved by a furin endopeptidase.

In terms of biological role, plays a specialized role in the generation of left-right asymmetry during embryogenesis. May act as a negative regulator of the NOTCH-signaling pathway. This is Matrix metallopeptidase-21 from Danio rerio (Zebrafish).